A 286-amino-acid polypeptide reads, in one-letter code: Spermidine/putrescine transport system permease protein PotB (286 aa).

At 1 to 13 (MKIINNKFQKITV) the chain is on the cytoplasmic side. Residues 14 to 33 (AIIFSWLIFFVLIPNLLVLA) form a helical membrane-spanning segment. The Periplasmic portion of the chain corresponds to 34 to 71 (VSFLTRDGSNFYAFPITIENYTNLFNPLYAQVVWNSLS). One can recognise an ABC transmembrane type-1 domain in the interval 66–274 (VWNSLSMSGI…MALLIFVYYR (209 aa)). The helical transmembrane segment at 72 to 91 (MSGIATIICLLIGYPFAFMM) threads the bilayer. Residues 92–100 (SKIHPKYRP) lie on the Cytoplasmic side of the membrane. Residues 101–120 (LLLFLVVLPFWTNSLIRIYG) form a helical membrane-spanning segment. Over 121 to 151 (MKVFLGVKGILNTMLIDMGILSAPIRILNTE) the chain is Periplasmic. The helical transmembrane segment at 152-171 (IAVIIGLVYLLLPFMILPLY) threads the bilayer. Over 172 to 199 (SAIEKLDNRLLEAARDLGANTFQRFFRV) the chain is Cytoplasmic. A helical membrane pass occupies residues 200 to 219 (ILPLTMPGIIAGCLLVLLPA). The Periplasmic segment spans residues 220–252 (MGMFYVADLLGGAKVLLVGNVIKSEFLISRNWP). Residues 253–272 (FGSAVSIGLTVLMALLIFVY) form a helical membrane-spanning segment. Residues 273-286 (YRANKLLNRKVELE) lie on the Cytoplasmic side of the membrane.

It belongs to the binding-protein-dependent transport system permease family. CysTW subfamily.

Its subcellular location is the cell inner membrane. Its function is as follows. Required for the activity of the bacterial periplasmic transport system of putrescine and spermidine. The sequence is that of Spermidine/putrescine transport system permease protein PotB (potB) from Haemophilus influenzae (strain ATCC 51907 / DSM 11121 / KW20 / Rd).